Consider the following 310-residue polypeptide: N-acetyl-gamma-glutamyl-phosphate reductase (310 aa).

The active site involves cysteine 117.

Belongs to the NAGSA dehydrogenase family. Type 2 subfamily.

It localises to the cytoplasm. It catalyses the reaction N-acetyl-L-glutamate 5-semialdehyde + phosphate + NADP(+) = N-acetyl-L-glutamyl 5-phosphate + NADPH + H(+). The protein operates within amino-acid biosynthesis; L-arginine biosynthesis; N(2)-acetyl-L-ornithine from L-glutamate: step 3/4. In terms of biological role, catalyzes the NADPH-dependent reduction of N-acetyl-5-glutamyl phosphate to yield N-acetyl-L-glutamate 5-semialdehyde. The chain is N-acetyl-gamma-glutamyl-phosphate reductase from Brucella melitensis biotype 1 (strain ATCC 23456 / CCUG 17765 / NCTC 10094 / 16M).